A 731-amino-acid chain; its full sequence is Gelsolin (731 aa).

The interval 2-125 (VVEHPEFLKA…YKKGGVASGF (124 aa)) is actin-severing. Residues 25 to 107 (FDLVPVPPNL…VQGFESATFL (83 aa)) form a Gelsolin-like 1 repeat. Position 35 is a phosphotyrosine (Tyr-35). Ca(2+)-binding residues include Gly-41, Asp-42, Glu-73, Asp-85, Gly-90, and Ala-92. Positions 72–75 (DESG) are actin-actin interfilament contact point. 111–118 (KSGLKYKK) contacts a 1,2-diacyl-sn-glycero-3-phospho-(1D-myo-inositol-4,5-bisphosphate). Position 121 (Val-121) interacts with Ca(2+). 137-145 (RLFQVKGRR) is a binding site for a 1,2-diacyl-sn-glycero-3-phospho-(1D-myo-inositol-4,5-bisphosphate). The Gelsolin-like 2 repeat unit spans residues 147-219 (VRATEVPVSW…SEEGAEPEAM (73 aa)). Residues Gly-162 and Asp-163 each contribute to the Ca(2+) site. A disulfide bond links Cys-164 and Cys-177. Glu-185 contacts Ca(2+). Positions 197-211 (RDNERSGRARVHVSE) are enriched in basic and acidic residues. The tract at residues 197 to 216 (RDNERSGRARVHVSEEGAEP) is disordered. Ca(2+)-binding residues include Asp-235, Glu-278, Asp-279, and Glu-303. The stretch at 266–338 (DENPFAQGAL…LPEGGETPLF (73 aa)) is one Gelsolin-like 3 repeat. Residues Tyr-358 and Tyr-414 each carry the phosphotyrosine modification. The interval 383–731 (AAQHGMDDDG…LDRALAELAA (349 aa)) is actin-binding, Ca-sensitive. The Gelsolin-like 4 repeat unit spans residues 404 to 485 (SDKVPVDPAT…VQGKEPAHLM (82 aa)). Ca(2+)-binding residues include Gly-420, Asp-421, Glu-451, Asp-463, Gly-468, Pro-470, and Thr-500. Residues 527–591 (AVEVMPKAGA…AEGSEPDSFW (65 aa)) form a Gelsolin-like 5 repeat. Lys-533 carries the N6-acetyllysine modification. Ca(2+)-binding residues include Asn-540 and Asp-541. Phosphotyrosine is present on Tyr-552. Glu-563 provides a ligand contact to Ca(2+). Tyr-600 carries the post-translational modification Phosphotyrosine. One copy of the Gelsolin-like 6 repeat lies at 630-705 (IEEVPGELMQ…VKQGFEPPSF (76 aa)). The Ca(2+) site is built by Asp-645, Asp-646, and Glu-668. A Phosphothreonine modification is found at Thr-691.

It belongs to the villin/gelsolin family. Binds to actin and to fibronectin. Identified in a complex composed of ACTA1, COBL, GSN and TMSB4X. Interacts with the inactive form of EIF2AK2/PKR. Interacts with FLII.

Its subcellular location is the cytoplasm. It localises to the cytoskeleton. Functionally, calcium-regulated, actin-modulating protein that binds to the plus (or barbed) ends of actin monomers or filaments, preventing monomer exchange (end-blocking or capping). It can promote the assembly of monomers into filaments (nucleation) as well as sever filaments already formed. Plays a role in ciliogenesis. The sequence is that of Gelsolin (GSN) from Bos taurus (Bovine).